The following is a 364-amino-acid chain: Adenosine 3'-phospho 5'-phosphosulfate transporter 2 (364 aa).

10 consecutive transmembrane segments (helical) span residues 39-59 (WLQF…YGYM), 74-94 (WTLT…ECII), 106-126 (IYGV…ASVG), 131-151 (PTQV…GILI), 157-177 (GWID…FTLA), 187-206 (SRGY…IGNI), 231-251 (VFIF…PFFL), 257-277 (TFGY…VVLT), 281-301 (VFGA…TIIL), and 310-330 (FTIE…LNLY).

The protein belongs to the nucleotide-sugar transporter family. SLC35B subfamily.

The protein localises to the golgi apparatus membrane. In terms of biological role, mediates the transport of adenosine 3'-phospho 5'-phosphosulfate (PAPS), from cytosol into Golgi. PAPS is a universal sulfuryl donor for sulfation events that take place in the Golgi. This chain is Adenosine 3'-phospho 5'-phosphosulfate transporter 2 (pst-2), found in Caenorhabditis elegans.